The following is a 65-amino-acid chain: MPKQKTHRASAKRFKRTGSGGLKRFRAFTSHRFHGKTKKQRRHLRKAGLVSSGDFKRIKAMVTGL.

Basic residues predominate over residues 1 to 16; the sequence is MPKQKTHRASAKRFKR. The interval 1–20 is disordered; the sequence is MPKQKTHRASAKRFKRTGSG.

It belongs to the bacterial ribosomal protein bL35 family.

In Streptococcus pyogenes serotype M1, this protein is Large ribosomal subunit protein bL35.